Here is a 79-residue protein sequence, read N- to C-terminus: Acyl carrier protein (79 aa).

Residues 2–77 enclose the Carrier domain; that stretch reads SDVAERVKKI…DAIDFIKANA (76 aa). Ser37 carries the post-translational modification O-(pantetheine 4'-phosphoryl)serine.

This sequence belongs to the acyl carrier protein (ACP) family. In terms of processing, 4'-phosphopantetheine is transferred from CoA to a specific serine of apo-ACP by AcpS. This modification is essential for activity because fatty acids are bound in thioester linkage to the sulfhydryl of the prosthetic group.

It localises to the cytoplasm. It functions in the pathway lipid metabolism; fatty acid biosynthesis. Carrier of the growing fatty acid chain in fatty acid biosynthesis. The polypeptide is Acyl carrier protein (Azospirillum brasilense).